Reading from the N-terminus, the 358-residue chain is Short chain dehydrogenase sor7 (358 aa).

Residues 1–22 (MSSPAIGQPPIPPTPTDANISG) form a disordered region. NADP(+) contacts are provided by Leu34, Asp88, Asn115, Tyr206, Lys210, Val238, and Thr240. The active-site Proton donor is Tyr206. The Lowers pKa of active site Tyr role is filled by Lys210.

Belongs to the short-chain dehydrogenases/reductases (SDR) family.

The protein operates within secondary metabolite biosynthesis. In terms of biological role, short chain dehydrogenase; part of the SOR gene cluster that mediates the biosynthesis of sorbicillinoids, a diverse group of yellow secondary metabolites that restrict growth of competing pathogenic fungi but not of bacteria. Sorbicillinoids biosynthesis requires the action of two PKSs. The SOR cluster is required for the production of trichodimerol and dihydrotrichotetronin, with sor2 being sufficient for production of trichodimerol, but not dihydrotrichotetronin in the light. Sor1 iteratively combines three acetyl units and the growing chain is modified by the ketoacyl reductase subunit, and optional by the enoyl reductase subunit in the second cycle. The polyketide is then handed over to the PKS sor2, which adds three more acetyl units, and two methyl groups. Sor2 releases an aldehyde, which undergoes spontaneous cyclization resulting in the formation of sorbicillin or 2',3'-dihydrosorbicillin. The monooxygenase sor5 oxidizes sorbicillin and 2',3'-dihydrosorbicillin to 2',3'-dihydrosorbicillinol and sorbicillinol, respectively. The oxidoreductase sor8 further converts sorbicillinol into oxosorbicillinol. Sorbicillinol is the building block for the other sorbicillinoids such as disorbicillinol, bisvertinolon, dihydrobisvertinolone, and dihydrotrichotetronine. This is Short chain dehydrogenase sor7 from Hypocrea jecorina (strain QM6a) (Trichoderma reesei).